A 224-amino-acid polypeptide reads, in one-letter code: Ankyrin repeat domain-containing protein 45 (224 aa).

ANK repeat units follow at residues 46-76 (VGRNALFAACMMGRSAIVRELVQNGAADVNE) and 80-109 (RGYSPLHCSAMWGQLDTLKTLVELNADFQA).

Widely expressed.

It localises to the cytoplasm. It is found in the midbody. The protein resides in the midbody ring. The protein localises to the cleavage furrow. May play a role during cell division. The sequence is that of Ankyrin repeat domain-containing protein 45 from Danio rerio (Zebrafish).